The chain runs to 318 residues: Methionyl-tRNA formyltransferase (318 aa).

112–115 (SILP) contacts (6S)-5,6,7,8-tetrahydrofolate.

This sequence belongs to the Fmt family.

It catalyses the reaction L-methionyl-tRNA(fMet) + (6R)-10-formyltetrahydrofolate = N-formyl-L-methionyl-tRNA(fMet) + (6S)-5,6,7,8-tetrahydrofolate + H(+). Functionally, attaches a formyl group to the free amino group of methionyl-tRNA(fMet). The formyl group appears to play a dual role in the initiator identity of N-formylmethionyl-tRNA by promoting its recognition by IF2 and preventing the misappropriation of this tRNA by the elongation apparatus. The protein is Methionyl-tRNA formyltransferase of Shewanella oneidensis (strain ATCC 700550 / JCM 31522 / CIP 106686 / LMG 19005 / NCIMB 14063 / MR-1).